A 122-amino-acid polypeptide reads, in one-letter code: Neutral phospholipase A2 agkistrodotoxin (122 aa).

Intrachain disulfides connect Cys26–Cys115, Cys28–Cys44, Cys43–Cys95, Cys49–Cys122, Cys50–Cys88, Cys57–Cys81, and Cys75–Cys86. Residues Tyr27, Gly29, and Gly31 each contribute to the Ca(2+) site. His47 is an active-site residue. Asp48 contributes to the Ca(2+) binding site. Asp89 is an active-site residue.

Requires Ca(2+) as cofactor. In terms of tissue distribution, expressed by the venom gland.

The protein resides in the secreted. The enzyme catalyses a 1,2-diacyl-sn-glycero-3-phosphocholine + H2O = a 1-acyl-sn-glycero-3-phosphocholine + a fatty acid + H(+). Snake venom phospholipase A2 (PLA2) that inhibits neuromuscular transmission by blocking acetylcholine release from the nerve termini. PLA2 catalyzes the calcium-dependent hydrolysis of the 2-acyl groups in 3-sn-phosphoglycerides. The polypeptide is Neutral phospholipase A2 agkistrodotoxin (Gloydius halys (Chinese water mocassin)).